The following is a 147-amino-acid chain: Deoxyuridine 5'-triphosphate nucleotidohydrolase (147 aa).

Substrate contacts are provided by residues 67-69 (RSG), Asn80, and 84-86 (TID).

The protein belongs to the dUTPase family. Mg(2+) is required as a cofactor.

It carries out the reaction dUTP + H2O = dUMP + diphosphate + H(+). It functions in the pathway pyrimidine metabolism; dUMP biosynthesis; dUMP from dCTP (dUTP route): step 2/2. This enzyme is involved in nucleotide metabolism: it produces dUMP, the immediate precursor of thymidine nucleotides and it decreases the intracellular concentration of dUTP so that uracil cannot be incorporated into DNA. This Anaeromyxobacter dehalogenans (strain 2CP-C) protein is Deoxyuridine 5'-triphosphate nucleotidohydrolase.